Consider the following 154-residue polypeptide: Ribosome maturation factor RimP (154 aa).

This sequence belongs to the RimP family.

The protein resides in the cytoplasm. In terms of biological role, required for maturation of 30S ribosomal subunits. The protein is Ribosome maturation factor RimP of Finegoldia magna (strain ATCC 29328 / DSM 20472 / WAL 2508) (Peptostreptococcus magnus).